A 192-amino-acid chain; its full sequence is Der GTPase-activating protein YihI (192 aa).

The segment at 1–80 is disordered; the sequence is MSRTKKTRRI…KAAVKEVKDP (80 aa). Composition is skewed to basic and acidic residues over residues 9–25, 37–48, and 65–80; these read RITD…KPEQ, TRYELDAKAREE, and DPAE…VKDP.

This sequence belongs to the YihI family. Interacts with Der.

In terms of biological role, a GTPase-activating protein (GAP) that modifies Der/EngA GTPase function. May play a role in ribosome biogenesis. This chain is Der GTPase-activating protein YihI, found in Actinobacillus pleuropneumoniae serotype 5b (strain L20).